A 122-amino-acid chain; its full sequence is Large ribosomal subunit protein bL12 (122 aa).

The protein belongs to the bacterial ribosomal protein bL12 family. In terms of assembly, homodimer. Part of the ribosomal stalk of the 50S ribosomal subunit. Forms a multimeric L10(L12)X complex, where L10 forms an elongated spine to which 2 to 4 L12 dimers bind in a sequential fashion. Binds GTP-bound translation factors.

Forms part of the ribosomal stalk which helps the ribosome interact with GTP-bound translation factors. Is thus essential for accurate translation. The chain is Large ribosomal subunit protein bL12 from Clostridium botulinum (strain Langeland / NCTC 10281 / Type F).